Reading from the N-terminus, the 776-residue chain is MKCPKILAALLGCAVLAGVPAMPAHAAINSMSLGASYDAQQANITFRVYSSQATRIVLYLYSAGYGVQESATYTLSPAGSGVWAVTVPVSSIKAAGITGAVYYGYRAWGPNWPYASNWGKGSQAGFVSDVDANGDRFNPNKLLLDPYAQEVSQDPLNPSNQNGNVFASGASYRTTDSGIYAPKGVVLVPSTQSTGTKPTRAQKDDVIYEVHVRGFTEQDTSIPAQYRGTYYGAGLKASYLASLGVTAVEFLPVQETQNDANDVVPNSDANQNYWGYMTENYFSPDRRYAYNKAAGGPTAEFQAMVQAFHNAGIKVYMDVVYNHTAEGGTWTSSDPTTATIYSWRGLDNTTYYELTSGNQYFYDNTGIGANFNTYNTVAQNLIVDSLAYWANTMGVDGFRFDLASVLGNSCLNGAYTASAPNCPNGGYNFDAADSNVAINRILREFTVRPAAGGSGLDLFAEPWAIGGNSYQLGGFPQGWSEWNGLFRDSLRQAQNELGSMTIYVTQDANDFSGSSNLFQSSGRSPWNSINFIDVHDGMTLKDVYSCNGANNSQAWPYGPSDGGTSTNYSWDQGMSAGTGAAVDQRRAARTGMAFEMLSAGTPLMQGGDEYLRTLQCNNNAYNLDSSANWLTYSWTTDQSNFYTFAQRLIAFRKAHPALRPSSWYSGSQLTWYQPSGAVADSNYWNNTSNYAIAYAINGPSLGDSNSIYVAYNGWSSSVTFTLPAPPSGTQWYRVTDTCDWNDGASTFVAPGSETLIGGAGTTYGQCGQSLLLLISK.

A signal peptide spans 1 to 26; that stretch reads MKCPKILAALLGCAVLAGVPAMPAHA. Residues aspartate 154, glutamate 255, threonine 256, asparagine 258, and aspartate 285 each coordinate Ca(2+). Catalysis depends on aspartate 401, which acts as the Nucleophile. Cysteines 410 and 422 form a disulfide. The active-site Proton donor is the glutamate 461. 2 disulfide bridges follow: cysteine 546–cysteine 616 and cysteine 738–cysteine 766.

This sequence belongs to the glycosyl hydrolase 13 family. Monomer. Ca(2+) is required as a cofactor.

It catalyses the reaction Hydrolysis of (1-&gt;6)-alpha-D-glucosidic branch linkages in glycogen, amylopectin and their beta-limit dextrins.. In Pseudomonas sp. (strain SMP1), this protein is Isoamylase (iam).